The following is a 944-amino-acid chain: Protein translocase subunit SecA (944 aa).

ATP contacts are provided by residues Gln-90, 108-112 (GEGKT), and Asp-509. The disordered stretch occupies residues 533 to 565 (VKPEEGHKPPVSPQRKTKSAGFKEEKNKNLSIS).

It belongs to the SecA family. In terms of assembly, monomer and homodimer. Part of the essential Sec protein translocation apparatus which comprises SecA, SecYEG and auxiliary proteins SecDF. Other proteins may also be involved.

Its subcellular location is the cell inner membrane. The protein localises to the cellular thylakoid membrane. It is found in the cytoplasm. The catalysed reaction is ATP + H2O + cellular proteinSide 1 = ADP + phosphate + cellular proteinSide 2.. Functionally, part of the Sec protein translocase complex. Interacts with the SecYEG preprotein conducting channel. Has a central role in coupling the hydrolysis of ATP to the transfer of proteins into and across the cell membrane, serving as an ATP-driven molecular motor driving the stepwise translocation of polypeptide chains across the membrane. Its function is as follows. Probably participates in protein translocation into and across both the cytoplasmic and thylakoid membranes in cyanobacterial cells. The polypeptide is Protein translocase subunit SecA (Prochlorococcus marinus (strain NATL1A)).